The following is a 359-amino-acid chain: Peptide chain release factor 1 (359 aa).

Gln233 is subject to N5-methylglutamine.

It belongs to the prokaryotic/mitochondrial release factor family. Post-translationally, methylated by PrmC. Methylation increases the termination efficiency of RF1.

Its subcellular location is the cytoplasm. In terms of biological role, peptide chain release factor 1 directs the termination of translation in response to the peptide chain termination codons UAG and UAA. This is Peptide chain release factor 1 from Orientia tsutsugamushi (strain Ikeda) (Rickettsia tsutsugamushi).